The chain runs to 410 residues: Replication-associated protein G2P (410 aa).

N-formylmethionine is present on Met1.

Belongs to the inovirus G2P protein family.

It catalyses the reaction ATP + (deoxyribonucleotide)n-3'-hydroxyl + 5'-phospho-(deoxyribonucleotide)m = (deoxyribonucleotide)n+m + AMP + diphosphate.. Its function is as follows. Isoform G2P plays an essential role in viral DNA replication. Binds the origin of replication and cleaves the dsDNA replicative form I (RFI) and becomes covalently bound to it via phosphotyrosine bond, generating the dsDNA replicative form II (RFII). In turn, viral DNA replication initiates at the 3'-OH of the cleavage site. After one round of rolling circle synthesis, protein G2P is linked to the newly synthesized ssDNA and joins the ends of the displaced strand to generate a circular single-stranded molecule ready to be packed into a virion. In terms of biological role, isoform G10P protein binds to double-stranded DNA and prevents hydrolysis by nucleases. Additionally, G10P is an inhibitor of DNA replication and may have a role in the transition from semiconservative replicative form DNA replication to single-stranded DNA synthesis in the life cycle. The polypeptide is Replication-associated protein G2P (II) (Enterobacteria phage fd (Bacteriophage fd)).